We begin with the raw amino-acid sequence, 420 residues long: Sodium-dependent phosphate transport protein 4 (420 aa).

The interval 1-21 (MATKTELSPTARESKNAQDMQ) is disordered. N49, N60, N68, and N77 each carry an N-linked (GlcNAc...) asparagine glycan. 8 helical membrane passes run 126-146 (SIALSGMLLGCFTAILIGGFI), 154-174 (FVFYIFGGVGCVCCLLWFVVI), 218-238 (IWSICLGCFSHQWLVSTMVVY), 256-276 (LLSALPFIVAWVIGMVGGYLA), 292-314 (IATILGSLPSSALIVSLPYLNSG), 319-341 (TALLTLSCGLSTLCQSGIYINVL), 357-377 (GFSSIAPVIVPTVSGFLLSQD), and 385-405 (VFFLLFAVNLLGLLFYLIFGE).

It belongs to the major facilitator superfamily. Sodium/anion cotransporter family. Expressed in the liver and kidney. It is detected in proximal tubules in renal cortex as well as some tubules and glomeruli, with highest expression at the apical side of proximal tubules (at protein level).

It localises to the endoplasmic reticulum membrane. The protein localises to the cell membrane. The enzyme catalyses urate(in) + Na(+)(out) = urate(out) + Na(+)(in). Transports organic anions in a voltage-driven, multispecific, manner, on the apical side of renal proximal tubule. In particular, participates in the secretion of urate from the cell into the lumen. Urate is the end product of purine metabolism. May have roles in the metabolism and secretion of estrone sulfate, estradiol-17-beta-glucuronide, ochratoxin A, as wells as drugs such as bumetanide. The protein is Sodium-dependent phosphate transport protein 4 (SLC17A3) of Homo sapiens (Human).